Here is a 538-residue protein sequence, read N- to C-terminus: Bifunctional purine biosynthesis protein PurH (538 aa).

The 153-residue stretch at lysine 6–valine 158 folds into the MGS-like domain.

This sequence belongs to the PurH family.

The catalysed reaction is (6R)-10-formyltetrahydrofolate + 5-amino-1-(5-phospho-beta-D-ribosyl)imidazole-4-carboxamide = 5-formamido-1-(5-phospho-D-ribosyl)imidazole-4-carboxamide + (6S)-5,6,7,8-tetrahydrofolate. It catalyses the reaction IMP + H2O = 5-formamido-1-(5-phospho-D-ribosyl)imidazole-4-carboxamide. The protein operates within purine metabolism; IMP biosynthesis via de novo pathway; 5-formamido-1-(5-phospho-D-ribosyl)imidazole-4-carboxamide from 5-amino-1-(5-phospho-D-ribosyl)imidazole-4-carboxamide (10-formyl THF route): step 1/1. Its pathway is purine metabolism; IMP biosynthesis via de novo pathway; IMP from 5-formamido-1-(5-phospho-D-ribosyl)imidazole-4-carboxamide: step 1/1. The polypeptide is Bifunctional purine biosynthesis protein PurH (Brucella anthropi (strain ATCC 49188 / DSM 6882 / CCUG 24695 / JCM 21032 / LMG 3331 / NBRC 15819 / NCTC 12168 / Alc 37) (Ochrobactrum anthropi)).